A 115-amino-acid chain; its full sequence is Large ribosomal subunit protein uL22 (115 aa).

Belongs to the universal ribosomal protein uL22 family. As to quaternary structure, part of the 50S ribosomal subunit.

In terms of biological role, this protein binds specifically to 23S rRNA; its binding is stimulated by other ribosomal proteins, e.g. L4, L17, and L20. It is important during the early stages of 50S assembly. It makes multiple contacts with different domains of the 23S rRNA in the assembled 50S subunit and ribosome. The globular domain of the protein is located near the polypeptide exit tunnel on the outside of the subunit, while an extended beta-hairpin is found that lines the wall of the exit tunnel in the center of the 70S ribosome. This chain is Large ribosomal subunit protein uL22, found in Coxiella burnetii (strain CbuK_Q154) (Coxiella burnetii (strain Q154)).